The chain runs to 289 residues: ATP phosphoribosyltransferase (289 aa).

Belongs to the ATP phosphoribosyltransferase family. Long subfamily. Mg(2+) is required as a cofactor.

The protein localises to the cytoplasm. The enzyme catalyses 1-(5-phospho-beta-D-ribosyl)-ATP + diphosphate = 5-phospho-alpha-D-ribose 1-diphosphate + ATP. It participates in amino-acid biosynthesis; L-histidine biosynthesis; L-histidine from 5-phospho-alpha-D-ribose 1-diphosphate: step 1/9. Feedback inhibited by histidine. Its function is as follows. Catalyzes the condensation of ATP and 5-phosphoribose 1-diphosphate to form N'-(5'-phosphoribosyl)-ATP (PR-ATP). Has a crucial role in the pathway because the rate of histidine biosynthesis seems to be controlled primarily by regulation of HisG enzymatic activity. The sequence is that of ATP phosphoribosyltransferase from Methanosarcina mazei (strain ATCC BAA-159 / DSM 3647 / Goe1 / Go1 / JCM 11833 / OCM 88) (Methanosarcina frisia).